Consider the following 31-residue polypeptide: Cytochrome b6-f complex subunit 6 (31 aa).

Residues 4–24 traverse the membrane as a helical segment; the sequence is ITSYFGFLLAALTITSVLFIG.

It belongs to the PetL family. In terms of assembly, the 4 large subunits of the cytochrome b6-f complex are cytochrome b6, subunit IV (17 kDa polypeptide, PetD), cytochrome f and the Rieske protein, while the 4 small subunits are PetG, PetL, PetM and PetN. The complex functions as a dimer.

It localises to the plastid. It is found in the chloroplast thylakoid membrane. Functionally, component of the cytochrome b6-f complex, which mediates electron transfer between photosystem II (PSII) and photosystem I (PSI), cyclic electron flow around PSI, and state transitions. PetL is important for photoautotrophic growth as well as for electron transfer efficiency and stability of the cytochrome b6-f complex. The sequence is that of Cytochrome b6-f complex subunit 6 from Lepidium virginicum (Virginia pepperweed).